A 204-amino-acid polypeptide reads, in one-letter code: Inositol diphosphatase DSP5 (204 aa).

Residues 19-168 (NFSMVEDEIY…FDVLRLKQCL (150 aa)) form the Tyrosine-protein phosphatase domain. Positions 75-87 (FGIEGKTDPPTPM) are WPD loop important for active site topology. The active-site Phosphocysteine intermediate is the C111.

It belongs to the protein-tyrosine phosphatase family. Atypical dual-specificity phosphatase Siw14-like subfamily. Highly expressed in flowers. Expressed at low levels in roots, leaves, stems and siliques.

The catalysed reaction is 5-diphospho-1D-myo-inositol 1,2,3,4,6-pentakisphosphate + H2O = 1D-myo-inositol hexakisphosphate + phosphate + H(+). It carries out the reaction 1,5-bis(diphospho)-1D-myo-inositol 2,3,4,6-tetrakisphosphate + H2O = 1-diphospho-1D-myo-inositol 2,3,4,5,6-pentakisphosphate + phosphate + 2 H(+). It catalyses the reaction 3,5-bis(diphospho)-1D-myo-inositol 1,2,4,6-tetrakisphosphate + H2O = 3-diphospho-1D-myo-inositol 1,2,4,5,6-pentakisphosphate + phosphate + 2 H(+). The enzyme catalyses 6-diphospho-1D-myo-inositol pentakisphosphate + H2O = 1D-myo-inositol hexakisphosphate + phosphate + H(+). Functionally, cleaves the beta-phosphate at the 5-position of soluble inositol pyrophosphates. Has highest activity on 5-diphosphoinositol 1,2,3,4,6-pentakisphosphate (5-InsP(7)). Possesses low phosphotyrosine phosphatase activity in vitro. Dephosphorylates the phosphoinositides PI(3,5)P2. Hydrolyzes O-methylfluorescein phosphate in vitro. The polypeptide is Inositol diphosphatase DSP5 (Arabidopsis thaliana (Mouse-ear cress)).